The following is a 216-amino-acid chain: Homologous-pairing protein 2 (216 aa).

The protein belongs to the HOP2 family. Interacts with mcp7.

It localises to the nucleus. In terms of biological role, required for proper homologous pairing and efficient cross-over and intragenic recombination during meiosis. Acts indirectly in a process facilitating homologous recombination. Acts during mid- to late-horse-tail period. The chain is Homologous-pairing protein 2 (meu13) from Schizosaccharomyces pombe (strain 972 / ATCC 24843) (Fission yeast).